The chain runs to 492 residues: E3 ubiquitin-protein ligase XIAP (492 aa).

3 BIR repeats span residues 40–105 (RLAS…KFIN), 172–237 (RLQT…YFVL), and 271–334 (RLET…KFLI). Positions 303, 306, 323, and 330 each coordinate Zn(2+). The RING-type zinc finger occupies 445–480 (CKVCMDRRISIVFIPCGHLVACAVCADVLDKCPICC).

It belongs to the IAP family. In terms of assembly, monomer, and homodimer. In terms of processing, degraded in a 2-step mechanism; a caspase-independent first step and a caspase-dependent second step. Stabilized indirectly by MAPK, which acts to delay caspase activation, rather than directly phosphorylating xiap.

It is found in the cytoplasm. It catalyses the reaction S-ubiquitinyl-[E2 ubiquitin-conjugating enzyme]-L-cysteine + [acceptor protein]-L-lysine = [E2 ubiquitin-conjugating enzyme]-L-cysteine + N(6)-ubiquitinyl-[acceptor protein]-L-lysine.. Its function is as follows. Multi-functional protein which regulates not only caspases and apoptosis, but also acts as an E3 ubiquitin-protein ligase mediating ubiquitination and subsequent proteasomal degradation of its target proteins. Acts as a direct caspase inhibitor. E3 ubiquitin-protein ligase that acts as an important regulator of innate immunity by mediating 'Lys-63'-linked polyubiquitination of ripk2 downstream of NOD1 and NOD2, thereby transforming ripk2 into a scaffolding protein for downstream effectors, ultimately leading to activation of the NF-kappa-B and MAP kinases signaling. A key apoptotic suppressor in eggs. Acts as a positive regulator of Wnt signaling. The sequence is that of E3 ubiquitin-protein ligase XIAP (xiap) from Xenopus tropicalis (Western clawed frog).